We begin with the raw amino-acid sequence, 122 residues long: Serum amyloid A-1 protein (122 aa).

A signal peptide spans 1–18; the sequence is MKLLTGLVFCSLVLGVSS. Residues 19–45 form an important for amyloid formation; forms amyloid fibrils in vitro region; sequence RSFFSFLGEAFDGARDMWRAYSDMREA. A propeptide spans 95–122 (often cleaved during amyloidogenesis); sequence LADQAANEWGRSGKDPNHFRPAGLPEKY. A disordered region spans residues 98 to 122; sequence QAANEWGRSGKDPNHFRPAGLPEKY. At asparagine 101 the chain carries N4,N4-dimethylasparagine.

The protein belongs to the SAA family. Homohexamer; dimer of trimers. Can form amyloid fibrils after partial proteolysis; the native, undenatured protein does not form amyloid fibrils (in vitro). Apolipoprotein of the HDL complex. Binds to heparin. In terms of processing, this protein is the precursor of amyloid protein A, which is formed by the removal of approximately 24 residues from the C-terminal end. Expressed by the liver; secreted in plasma (at protein level).

Its subcellular location is the secreted. Its function is as follows. Major acute phase protein. In Homo sapiens (Human), this protein is Serum amyloid A-1 protein (SAA1).